A 300-amino-acid chain; its full sequence is GTPase Era (300 aa).

The region spanning 8–176 (RCGYVAIVGR…ERLVAGRLPQ (169 aa)) is the Era-type G domain. The interval 16 to 23 (GRPNVGKS) is G1. 16–23 (GRPNVGKS) serves as a coordination point for GTP. The segment at 42–46 (QTTRH) is G2. The interval 63 to 66 (DTPG) is G3. Residues 63–67 (DTPGL) and 125–128 (NKAD) each bind GTP. The G4 stretch occupies residues 125–128 (NKAD). The segment at 155–157 (ISA) is G5. The 85-residue stretch at 199–283 (VREKIMRQLG…MLNLWVKVKG (85 aa)) folds into the KH type-2 domain.

The protein belongs to the TRAFAC class TrmE-Era-EngA-EngB-Septin-like GTPase superfamily. Era GTPase family. In terms of assembly, monomer.

Its subcellular location is the cytoplasm. It is found in the cell inner membrane. Functionally, an essential GTPase that binds both GDP and GTP, with rapid nucleotide exchange. Plays a role in 16S rRNA processing and 30S ribosomal subunit biogenesis and possibly also in cell cycle regulation and energy metabolism. This Azotobacter vinelandii (strain DJ / ATCC BAA-1303) protein is GTPase Era.